We begin with the raw amino-acid sequence, 141 residues long: ATP synthase epsilon chain (141 aa).

The protein belongs to the ATPase epsilon chain family. In terms of assembly, F-type ATPases have 2 components, CF(1) - the catalytic core - and CF(0) - the membrane proton channel. CF(1) has five subunits: alpha(3), beta(3), gamma(1), delta(1), epsilon(1). CF(0) has three main subunits: a, b and c.

The protein localises to the cell inner membrane. Functionally, produces ATP from ADP in the presence of a proton gradient across the membrane. The polypeptide is ATP synthase epsilon chain (Teredinibacter turnerae (strain ATCC 39867 / T7901)).